We begin with the raw amino-acid sequence, 340 residues long: Entry-fusion complex protein OPG094 (340 aa).

Residues 1–20 are disordered; that stretch reads MGGGVSVELPKRDPPPGVPT. Gly2 is lipidated: N-myristoyl glycine; by host. The Virion surface portion of the chain corresponds to 2–319; the sequence is GGGVSVELPK…VQHNIKHSFD (318 aa). The helical; Signal-anchor for type II membrane protein transmembrane segment at 320–340 threads the bilayer; sequence LKLHLISLLSLLVIWILIVAI.

This sequence belongs to the orthopoxvirus OPG086 family. As to quaternary structure, interacts with OPG143. Component of the entry fusion complex (EFC) composed of OPG053, OPG076, OPG086, OPG094, OPG095, OPG099, OPG107, OPG143, OPG104, OPG147 and OPG155. Except for OPG095 and OPG053, each of the EFC proteins is required for assembly or stability of the complex. In terms of processing, unglycosylated because produced in viral factories instead of the classic ER -Golgi route.

Its subcellular location is the virion membrane. Component of the entry fusion complex (EFC), which consists of 11 proteins. During cell infection, this complex mediates entry of the virion core into the host cytoplasm by a two-step mechanism consisting of lipid mixing of the viral and cellular membranes and subsequent pore formation. This is Entry-fusion complex protein OPG094 (OPG094) from Homo sapiens (Human).